Reading from the N-terminus, the 336-residue chain is Opsin-1, short-wave-sensitive 1 (336 aa).

Residues 1 to 29 are Extracellular-facing; it reads MDAWAVQFGNASKVSPFEGEQYHIAPKWA. Asparagine 10 carries an N-linked (GlcNAc...) asparagine glycan. Residues 30–54 traverse the membrane as a helical segment; sequence FYLQAAFMGFVFIVGTPMNGIVLFV. The Cytoplasmic segment spans residues 55–66; the sequence is TMKYKKLRQPLN. The helical transmembrane segment at 67–91 threads the bilayer; that stretch reads YILVNISLAGFIFDTFSVSQVFVCA. Topologically, residues 92–106 are extracellular; the sequence is ARGYYFLGYTLCAME. An intrachain disulfide couples cysteine 103 to cysteine 180. A helical transmembrane segment spans residues 107-126; that stretch reads AAMGSIAGLVTGWSLAVLAF. At 127 to 145 the chain is on the cytoplasmic side; sequence ERYVVICKPFGSFKFGQGQ. The helical transmembrane segment at 146–169 threads the bilayer; the sequence is AVGAVVFTWIIGTACATPPFFGWS. At 170–195 the chain is on the extracellular side; sequence RYIPEGLGTACGPDWYTKSEEYNSES. A helical membrane pass occupies residues 196–223; it reads YTYFLLITCFMMPMTIIIFSYSQLLGAL. Residues 224-245 lie on the Cytoplasmic side of the membrane; sequence RAVAAQQAESESTQKAEREVSR. Residues 246–269 traverse the membrane as a helical segment; that stretch reads MVVVMVGSFVLCYAPYAVTAMYFA. Residues 270–277 are Extracellular-facing; the sequence is NSDEPNKD. Residues 278–302 traverse the membrane as a helical segment; that stretch reads YRLVAIPAFFSKSSCVYNPLIYAFM. Residue lysine 289 is modified to N6-(retinylidene)lysine. Over 303-336 the chain is Cytoplasmic; the sequence is NKQFNACIMETVFGKKIDESSEVSSKTETSSVSA.

The protein belongs to the G-protein coupled receptor 1 family. Opsin subfamily. Phosphorylated on some or all of the serine and threonine residues present in the C-terminal region. As to expression, retinal short single cones, outer and inner segments.

The protein resides in the membrane. Visual pigments are the light-absorbing molecules that mediate vision. They consist of an apoprotein, opsin, covalently linked to cis-retinal. The chain is Opsin-1, short-wave-sensitive 1 (opn1sw1) from Danio rerio (Zebrafish).